A 325-amino-acid polypeptide reads, in one-letter code: Xylosidase/arabinosidase (325 aa).

Aspartate 16 serves as the catalytic Proton acceptor. The active-site Proton donor is glutamate 224.

This sequence belongs to the glycosyl hydrolase 43 family.

The enzyme catalyses Hydrolysis of (1-&gt;4)-beta-D-xylans, to remove successive D-xylose residues from the non-reducing termini.. The catalysed reaction is Hydrolysis of terminal non-reducing alpha-L-arabinofuranoside residues in alpha-L-arabinosides.. The polypeptide is Xylosidase/arabinosidase (xsa) (Bacteroides ovatus).